Consider the following 395-residue polypeptide: Zinc-regulated GTPase metalloprotein activator 1B (395 aa).

The disordered stretch occupies residues Met-1 to Ser-36. The span at Ala-8–Pro-20 shows a compositional bias: acidic residues. The psi-PxLVp motif signature appears at Glu-17–Pro-24. Residue Gly-49–Thr-56 participates in GTP binding. Zn(2+)-binding residues include Cys-107, Cys-109, and Cys-110. A CXCC motif motif is present at residues Cys-107–Cys-110. Residues Cys-110–Asp-114 and Asn-203–Asp-206 each bind GTP. A CobW C-terminal domain is found at Ile-274 to Val-377.

It belongs to the SIMIBI class G3E GTPase family. ZNG1 subfamily.

Its subcellular location is the nucleus. It catalyses the reaction GTP + H2O = GDP + phosphate + H(+). In terms of biological role, zinc chaperone that directly transfers zinc cofactor to target metalloproteins, thereby activating them. Catalyzes zinc insertion into the active site of methionine aminopeptidase METAP1, which function to cleave the initiator methionine from polypeptides during or after protein translation. Mechanistically, the N-terminal psi-PxLVp motif binds to the C6H2-type zinc finger of inactive form of METAP1. After formation of the docked complex, zinc is transferred from the CXCC motif in the GTPase domain of ZNG1B to the zinc binding site in the peptidase domain of METAP1 in a process requiring GTP hydrolysis. GTP/GDP exchange is required for release of active METAP1. This is Zinc-regulated GTPase metalloprotein activator 1B from Homo sapiens (Human).